Here is a 211-residue protein sequence, read N- to C-terminus: MRVRKRKGAEKHLANNPHYVILNPEDAKGRWHDVFGNDRPIHIEVGSGKGGFITGMALKNPDINYIGIDIQLSVLSYALDKVLASEVPNVKLLRVDGSSLTNYFEDGEVDMMYLNFSDPWPKTKHEKRRLTYKDFLDTYKRILPEHGEIHFKTDNRGLFEYSLASFSQYGMTLRQIWLDLHASNYEGNVMTEYEEKFSNKGQVIYRVEANF.

4 residues coordinate S-adenosyl-L-methionine: Glu-44, Asp-69, Asp-96, and Asp-118. Asp-118 is an active-site residue. Lys-122 is a substrate binding site. Residues 124-129 (KHEKRR) are interaction with RNA. Substrate-binding positions include Asp-154 and 191–194 (TEYE).

This sequence belongs to the class I-like SAM-binding methyltransferase superfamily. TrmB family.

The enzyme catalyses guanosine(46) in tRNA + S-adenosyl-L-methionine = N(7)-methylguanosine(46) in tRNA + S-adenosyl-L-homocysteine. It functions in the pathway tRNA modification; N(7)-methylguanine-tRNA biosynthesis. Functionally, catalyzes the formation of N(7)-methylguanine at position 46 (m7G46) in tRNA. The chain is tRNA (guanine-N(7)-)-methyltransferase from Streptococcus pyogenes serotype M18 (strain MGAS8232).